A 234-amino-acid polypeptide reads, in one-letter code: Thymidylate kinase (234 aa).

20 to 27 (GIDASGKT) contributes to the ATP binding site.

It belongs to the thymidylate kinase family.

The catalysed reaction is dTMP + ATP = dTDP + ADP. Its function is as follows. Phosphorylation of dTMP to form dTDP in both de novo and salvage pathways of dTTP synthesis. The protein is Thymidylate kinase of Mycoplasmopsis pulmonis (strain UAB CTIP) (Mycoplasma pulmonis).